The following is a 969-amino-acid chain: Chromosome transmission fidelity protein 18 homolog (969 aa).

The segment at glutamate 30–proline 97 is disordered. A Phosphothreonine modification is found at threonine 51. Serine 221 bears the Phosphoserine mark. 2 disordered regions span residues serine 250 to glutamine 269 and arginine 318 to lysine 340. Residues leucine 257 to glycine 268 are compositionally biased toward low complexity. Glycine 369 to threonine 376 provides a ligand contact to ATP. Residues alanine 856–histidine 889 form a disordered region. Residues serine 876–histidine 889 are compositionally biased toward basic and acidic residues.

The protein belongs to the activator 1 small subunits family. CTF18 subfamily. In terms of assembly, component of the CTF18-RFC complex, which consists of CTF18, CTF8, DCC1, RFC2, RFC3, RFC4 and RFC5. During assembly of the CTF18-RFC complex, CTF18 may first assemble into a subcomplex with RFC2, RFC3, RFC4 and RFC5. CTF18 then interacts directly with CTF8, which in turn interacts with DCC1. The CTF18-RFC complex associates with PCNA and with DNA polymerase POLH. The CTF18-RFC complex does not interact with the Rad9/Rad1/Hus1 complex. CTF18 interacts with SMC1A and RAD21. Interacts with DDX11.

Its subcellular location is the nucleus. In terms of biological role, chromosome cohesion factor involved in sister chromatid cohesion and fidelity of chromosome transmission. Component of one of the cell nuclear antigen loader complexes, CTF18-replication factor C (CTF18-RFC), which consists of CTF18, CTF8, DCC1, RFC2, RFC3, RFC4 and RFC5. The CTF18-RFC complex binds to single-stranded and primed DNAs and has weak ATPase activity that is stimulated by the presence of primed DNA, replication protein A (RPA) and by proliferating cell nuclear antigen (PCNA). The CTF18-RFC complex catalyzes the ATP-dependent loading of PCNA onto primed and gapped DNA. Interacts with and stimulates DNA polymerase POLH. During DNA repair synthesis, involved in loading DNA polymerase POLE at the sites of local damage. This chain is Chromosome transmission fidelity protein 18 homolog (Chtf18), found in Mus musculus (Mouse).